A 456-amino-acid chain; its full sequence is Bis(5'-adenosyl)-triphosphatase enpp4 (456 aa).

Positions 1–18 (MFNMKILVIPLFWGLVTG) are cleaved as a signal peptide. At 19-410 (YKGNSSDSSA…DQWCINLPEA (392 aa)) the chain is on the extracellular side. Zn(2+) contacts are provided by aspartate 37 and threonine 73. The AMP-threonine intermediate role is filled by threonine 73. Residue asparagine 94 coordinates substrate. Asparagine 148 carries N-linked (GlcNAc...) asparagine glycosylation. Tyrosine 157 is a binding site for substrate. Residue asparagine 169 is glycosylated (N-linked (GlcNAc...) asparagine). Zn(2+) contacts are provided by aspartate 192, histidine 196, aspartate 240, and histidine 241. Aspartate 192 contacts substrate. Cysteine 257 and cysteine 290 are joined by a disulfide. Residues asparagine 279 and asparagine 330 are each glycosylated (N-linked (GlcNAc...) asparagine). Histidine 339 provides a ligand contact to Zn(2+). N-linked (GlcNAc...) asparagine glycosylation is present at asparagine 389. A disulfide bridge connects residues cysteine 397 and cysteine 404. A helical transmembrane segment spans residues 411-431 (IGIVVSALLVLTMLTGLMIFM). The Cytoplasmic portion of the chain corresponds to 432-456 (RSRASTSRPFSRLQLQEDDDDPLID).

It belongs to the nucleotide pyrophosphatase/phosphodiesterase family. Requires Zn(2+) as cofactor.

The protein resides in the cell membrane. The catalysed reaction is P(1),P(3)-bis(5'-adenosyl) triphosphate + H2O = AMP + ADP + 2 H(+). In terms of biological role, hydrolyzes extracellular Ap3A into AMP and ADP, and Ap4A into AMP and ATP. Ap3A and Ap4A are diadenosine polyphosphates thought to induce proliferation of vascular smooth muscle cells. Acts as a procoagulant, mediating platelet aggregation at the site of nascent thrombus via release of ADP from Ap3A and activation of ADP receptors. The sequence is that of Bis(5'-adenosyl)-triphosphatase enpp4 (Enpp4) from Mus musculus (Mouse).